The chain runs to 239 residues: MKFYDLMSKSAEDVGLQLSKEQYEKFIDYMKLLQEWNEKINLTAIIDDEEIIKKHFIDSIKAFKRDEFKIASSLIDVGTGAGFPGLPIAIMRADLNVTLLDSLNKRVSFLNTVINRIGASNVTTIHSRAEDGAKDIKLRENFDIATSRAVANMSVLSELCLPYVKVGGSFIALKGPSVDQEIIESTNAIKILGGKILEVCEINIEDTELKHNLVVVKKIDRSPKGYPRRAGLISKNPIK.

S-adenosyl-L-methionine-binding positions include Gly-78, Phe-83, 129–130 (AE), and Arg-148.

Belongs to the methyltransferase superfamily. RNA methyltransferase RsmG family.

It localises to the cytoplasm. Functionally, specifically methylates the N7 position of a guanine in 16S rRNA. This chain is Ribosomal RNA small subunit methyltransferase G, found in Clostridium beijerinckii (strain ATCC 51743 / NCIMB 8052) (Clostridium acetobutylicum).